Reading from the N-terminus, the 141-residue chain is Arsenate reductase (141 aa).

The active-site Nucleophile; cysteine thioarsenate intermediate is the Cys-12.

The protein belongs to the ArsC family.

The enzyme catalyses [glutaredoxin]-dithiol + arsenate + glutathione + H(+) = glutathionyl-S-S-[glutaredoxin] + arsenite + H2O. Involved in resistance to arsenate. Catalyzes the reduction of arsenate [As(V)] to arsenite [As(III)]. The protein is Arsenate reductase of Escherichia coli (strain K12).